We begin with the raw amino-acid sequence, 420 residues long: Tyrosine--tRNA ligase 1 (420 aa).

Y35 contacts L-tyrosine. Positions P40 to H49 match the 'HIGH' region motif. L-tyrosine is bound by residues Y172 and Q176. The short motif at K232–T236 is the 'KMSKS' region element. K235 contributes to the ATP binding site. The S4 RNA-binding domain maps to I355–L419.

It belongs to the class-I aminoacyl-tRNA synthetase family. TyrS type 1 subfamily. Homodimer.

Its subcellular location is the cytoplasm. It catalyses the reaction tRNA(Tyr) + L-tyrosine + ATP = L-tyrosyl-tRNA(Tyr) + AMP + diphosphate + H(+). Functionally, catalyzes the attachment of tyrosine to tRNA(Tyr) in a two-step reaction: tyrosine is first activated by ATP to form Tyr-AMP and then transferred to the acceptor end of tRNA(Tyr). This Pseudoalteromonas translucida (strain TAC 125) protein is Tyrosine--tRNA ligase 1.